Here is a 378-residue protein sequence, read N- to C-terminus: MAWPCVTRACCIARFGNLQDKGDIAVPLMYSKYSEVTDGAQPPPPRPGSAAIETQPSLSDPYSGSLGRFSKKPESARGSVMRQDYQAWKANPEPSCKPRIEYQPSEAPLERETQYKKDFRSWPIPRQGDHPWIPKLSPSPTMPVIASDDKRKKDFVAPKAPPAEIKLINAEQPESAKGRGPTAFIAAPEILISVVQETNEIQKRESFMPKLPAKEPRATRDTGSPHPAQARGERGAGTSYRNEFRPWTDVKPVKPIKAKSQYQPPEEKVVHETSYKATFKGESNQPAAGDNKLMERRRIRSLYSEPSKESSKVEKPSVQTSKPKKTSTSHKPVKKAKEKIMASGRASKKKGAESSSTTKPEEKEKSKEINNKLAEAKE.

A disordered region spans residues 36–111 (VTDGAQPPPP…YQPSEAPLER (76 aa)). Positions 52 to 62 (IETQPSLSDPY) are enriched in polar residues. Mn regions lie at residues 79-99 (SVMRQDYQAWKANPEPSCKPR) and 112-135 (ETQYKKDFRSWPIPRQGDHPWIPK). 4 stretches are compositionally biased toward basic and acidic residues: residues 203 to 220 (KRESFMPKLPAKEPRATR), 242 to 252 (NEFRPWTDVKP), 265 to 274 (PEEKVVHETS), and 306 to 315 (PSKESSKVEK). The segment at 203–378 (KRESFMPKLP…INNKLAEAKE (176 aa)) is disordered. The mn 3 stretch occupies residues 237 to 260 (GTSYRNEFRPWTDVKPVKPIKAKS). A compositionally biased stretch (basic residues) spans 322 to 337 (KPKKTSTSHKPVKKAK). Positions 359 to 378 (KPEEKEKSKEINNKLAEAKE) are enriched in basic and acidic residues.

Belongs to the STOP family.

The protein resides in the cytoplasm. The protein localises to the cytoskeleton. Involved in microtubule stabilization in many cell types, including neuronal cells. Specifically has microtubule cold stabilizing activity. Involved in dendrite morphogenesis and maintenance by regulating lysosomal trafficking. The chain is Microtubule-associated protein 6 homolog (map6) from Xenopus tropicalis (Western clawed frog).